A 210-amino-acid polypeptide reads, in one-letter code: Ribosomal RNA large subunit methyltransferase E (210 aa).

S-adenosyl-L-methionine contacts are provided by Gly67, Trp69, Asp87, Asp103, and Asp128. Catalysis depends on Lys168, which acts as the Proton acceptor.

The protein belongs to the class I-like SAM-binding methyltransferase superfamily. RNA methyltransferase RlmE family.

It is found in the cytoplasm. It catalyses the reaction uridine(2552) in 23S rRNA + S-adenosyl-L-methionine = 2'-O-methyluridine(2552) in 23S rRNA + S-adenosyl-L-homocysteine + H(+). Its function is as follows. Specifically methylates the uridine in position 2552 of 23S rRNA at the 2'-O position of the ribose in the fully assembled 50S ribosomal subunit. This chain is Ribosomal RNA large subunit methyltransferase E, found in Psychrobacter arcticus (strain DSM 17307 / VKM B-2377 / 273-4).